The following is a 1099-amino-acid chain: MRMSDTVTVKDETATMKDLEAEVKDTTRVENLIKSENYGKILVEKNEHCIENNIDLQRPLQSFGQTGKRSKSSSKLKLVRSLAVCEESPPPPAPEISQENQEKIQIQLTQSFEKEEKPSKDEAEKEKASDKLPRKMLSRDSSQEYTDSTGIDLHEFLVNTLKNNPRDRMMLLKLEQEILDFIGNNESPRKKFPPMTSYHRMLLHRVAAYFGLDHNVDQSGKSVIVNKTSNTRIPDQKFNEHIKDDKGEDFQKRYILKRDNSSFDKDDNQMRIRLKDDRRSKSIEEREEEYQRARDRIFSQDSLCSQENYIIDKRLQDEDASSTQQRRQIFRVNKDASGRSTNSHQSSTENELKYSEPRPWSSTDSDSSLRNLKPAVTKASSFSGISVLTRGDSSGSSKSIGRLSKTGSESSGSVGSSTGSLSHIQQPLPGTALSQSSHGAPVVYPTVSTHSSLSFDGGLNGQVASPSTSFFLLPLEAAGIPPGSILINPQTGQPFINPDGSPVVYNPPMTQQPVRSQVPGPPQPPLPAPPQQPAANHIFSQDNLGSQFSHMSLARQPSADGSDPHAAMFQSTVVLQSPQQSGYIMTAAPPPHPPPPPPPPPPPPPLPPGQPVPTAGYPASGHPVSQPVLQQQGYIQQPSPQMPACYCAPGHYHSSQPQYRPVPSVHYNSHLNQPLPQPAQQTGYQVIPNQQQNYQGIVGVQQPQSQSLVSGQPNSIGNQIQGVVIPYTSVPTYQVSLPQGSQGIPHQTYQQPVMFPNQSNQGSMPTTGMPVYYSVIPPGQQNNLSSSVGYLQHPGSEQVQFPRTTSPCSSQQLQGHQCTAGPPPPPGGGMVMMQLSVPNNPQSCAHSPPQWKQNKYYCDHQRGQKCVEFSSVDNIVQHSPQLSSPIISPAQSPAPAQLSTLKTVRPSGPPLSIMPQFSRPFVPGQGDSRYPLLGQPLQYNPPAVLHGHIPNQQGQPGSRHGNRGRRQAKKAASTDLGAGETVVGKVLEITELPDGITRMEAEKLFGELFKIGAKIRWLRDPQSQPRRHPLCCGSGDNTANPERSKPSDLASTYTVLATFPSISAAQNALKKQINSVNKFKLRTSKKHYDFHILERASSQ.

A disordered region spans residues 111–146 (SFEKEEKPSKDEAEKEKASDKLPRKMLSRDSSQEYT). Residues 112–142 (FEKEEKPSKDEAEKEKASDKLPRKMLSRDSS) are compositionally biased toward basic and acidic residues. In terms of domain architecture, R3H spans 168 to 231 (RMMLLKLEQE…SVIVNKTSNT (64 aa)). Phosphoserine occurs at positions 187 and 262. Positions 232-302 (RIPDQKFNEH…ARDRIFSQDS (71 aa)) constitute an SUZ domain. The tract at residues 267–287 (DNQMRIRLKDDRRSKSIEERE) is disordered. S302 bears the Phosphoserine mark. Residues 331-370 (RVNKDASGRSTNSHQSSTENELKYSEPRPWSSTDSDSSLR) form a disordered region. 2 stretches are compositionally biased toward polar residues: residues 338-349 (GRSTNSHQSSTE) and 360-370 (WSSTDSDSSLR). Residues S380, S381, and S393 each carry the phosphoserine modification. 4 disordered regions span residues 387–439 (VLTR…SSHG), 490–537 (QTGQ…AANH), 583–625 (YIMT…HPVS), and 797–825 (EQVQ…PPPP). The span at 391–422 (GDSSGSSKSIGRLSKTGSESSGSVGSSTGSLS) shows a compositional bias: low complexity. Composition is skewed to pro residues over residues 519-532 (PGPP…PPQQ) and 588-611 (APPP…PGQP). Residues 797–817 (EQVQFPRTTSPCSSQQLQGHQ) are compositionally biased toward polar residues. Position 929 is an asymmetric dimethylarginine; alternate (R929). R929 is subject to Omega-N-methylarginine; alternate. Residues 941–977 (PPAVLHGHIPNQQGQPGSRHGNRGRRQAKKAASTDLG) form a disordered region. The segment covering 960-969 (HGNRGRRQAK) has biased composition (basic residues). Phosphoserine is present on S973.

This chain is R3H domain-containing protein 1 (R3HDM1), found in Homo sapiens (Human).